We begin with the raw amino-acid sequence, 263 residues long: Imidazole glycerol phosphate synthase subunit HisF (263 aa).

Residues aspartate 11 and aspartate 131 contribute to the active site.

This sequence belongs to the HisA/HisF family. In terms of assembly, heterodimer of HisH and HisF.

It localises to the cytoplasm. It carries out the reaction 5-[(5-phospho-1-deoxy-D-ribulos-1-ylimino)methylamino]-1-(5-phospho-beta-D-ribosyl)imidazole-4-carboxamide + L-glutamine = D-erythro-1-(imidazol-4-yl)glycerol 3-phosphate + 5-amino-1-(5-phospho-beta-D-ribosyl)imidazole-4-carboxamide + L-glutamate + H(+). It participates in amino-acid biosynthesis; L-histidine biosynthesis; L-histidine from 5-phospho-alpha-D-ribose 1-diphosphate: step 5/9. Its function is as follows. IGPS catalyzes the conversion of PRFAR and glutamine to IGP, AICAR and glutamate. The HisF subunit catalyzes the cyclization activity that produces IGP and AICAR from PRFAR using the ammonia provided by the HisH subunit. The sequence is that of Imidazole glycerol phosphate synthase subunit HisF from Deinococcus geothermalis (strain DSM 11300 / CIP 105573 / AG-3a).